The following is a 446-amino-acid chain: MFYLDTHNILYLGSCLLASVCTLCICRNRELFPHISENKPIGQLYRLMNIHKYESFSIIIQIHHLNLKFGDDDNAKFIVHLKIGNRYAYTHYHKQYQNKVHIEERKNMVVKQNNNTLRLEVYKKGTLKNTFFGSAEIHIYSEIVKKLFPCNVYFNITNKNQIVGTACLSFHYINLDCIKKDDQIYTSLFIETIISVQKNQTKNNEKIEKLIDEGKEHFEAIKETDLSTTIYKNISNLVLEDKIRLFCKNLNGYLLHSNFYIKRFYNKYYFYLHFFKGKFYWCYYNEEADAKMDKNRVGYVRLEYVANVYSDVYSHKYFYIKYRKKNERKENYLYLKTIDKDRNIWVNIIHDFIILVSNYKRERKNKKYKIKEFKDNLIEDTPKEILEINKTLSRSLSNNSMKNKYLDKKKKVEVLSDMDNEENYMNSGDLGPVFKDMSKNMYNYSD.

A C2 domain is found at 39–208; sequence KPIGQLYRLM…NQTKNNEKIE (170 aa). Residues 252 to 363 enclose the PH domain; the sequence is GYLLHSNFYI…ILVSNYKRER (112 aa).

The protein resides in the cytoplasmic vesicle. It localises to the secretory vesicle. Its subcellular location is the rhoptry membrane. Functionally, essential for merozoite invasion of host cells by controlling rhoptry secretion. Binds to phosphatidic acid (PA) and phosphatidylinositol 4,5-bisphosphate (PIP2) lipids and thus, likely contributes to the assembly of the machinery that docks or primes the rhoptry to the parasite cell membrane prior to the fusion with the host cell membrane. This Plasmodium falciparum (isolate 3D7) protein is Rhoptry surface protein CERLI1.